We begin with the raw amino-acid sequence, 1545 residues long: Pentafunctional AROM polypeptide (1545 aa).

Positions 1–383 (MSGLIEKVSI…YEPKASYVND (383 aa)) are 3-dehydroquinate synthase. NAD(+) contacts are provided by residues 44-46 (DSN), 82-85 (EANK), 113-115 (GGV), and aspartate 118. Arginine 129 is a 7-phospho-2-dehydro-3-deoxy-D-arabino-heptonate binding site. 138 to 139 (TS) provides a ligand contact to NAD(+). 2 residues coordinate 7-phospho-2-dehydro-3-deoxy-D-arabino-heptonate: aspartate 145 and lysine 151. Lysine 160 provides a ligand contact to NAD(+). Asparagine 161 is a binding site for 7-phospho-2-dehydro-3-deoxy-D-arabino-heptonate. NAD(+) contacts are provided by residues 178–181 (FLET) and asparagine 189. Glutamate 193 is a binding site for Zn(2+). Residues 193-196 (EVVK) and lysine 249 each bind 7-phospho-2-dehydro-3-deoxy-D-arabino-heptonate. The active-site Proton acceptor; for 3-dehydroquinate synthase activity is the glutamate 259. 7-phospho-2-dehydro-3-deoxy-D-arabino-heptonate-binding positions include 263-267 (RNLLN) and histidine 270. Histidine 270 lines the Zn(2+) pocket. Histidine 274 serves as the catalytic Proton acceptor; for 3-dehydroquinate synthase activity. Residues histidine 286 and lysine 355 each coordinate 7-phospho-2-dehydro-3-deoxy-D-arabino-heptonate. Histidine 286 provides a ligand contact to Zn(2+). Positions 396-840 (VKDFNSAPST…WDILHTTFNV (445 aa)) are EPSP synthase. Cysteine 822 functions as the For EPSP synthase activity in the catalytic mechanism. The tract at residues 859–1049 (DKSIIVIGMR…IPNGRSAFVC (191 aa)) is shikimate kinase. 866–873 (GMRAAGKS) provides a ligand contact to ATP. A 3-dehydroquinase region spans residues 1050 to 1261 (LTYEDLAPVS…AAPGQLTLKE (212 aa)). Histidine 1166 functions as the Proton acceptor; for 3-dehydroquinate dehydratase activity in the catalytic mechanism. Lysine 1195 serves as the catalytic Schiff-base intermediate with substrate; for 3-dehydroquinate dehydratase activity. The tract at residues 1274–1545 (RKKFYIVGKP…GYQFSSHIDL (272 aa)) is shikimate dehydrogenase.

It in the N-terminal section; belongs to the sugar phosphate cyclases superfamily. Dehydroquinate synthase family. The protein in the 2nd section; belongs to the EPSP synthase family. This sequence in the 3rd section; belongs to the shikimate kinase family. In the 4th section; belongs to the type-I 3-dehydroquinase family. It in the C-terminal section; belongs to the shikimate dehydrogenase family. In terms of assembly, homodimer. Zn(2+) is required as a cofactor.

The protein localises to the cytoplasm. The catalysed reaction is 7-phospho-2-dehydro-3-deoxy-D-arabino-heptonate = 3-dehydroquinate + phosphate. It catalyses the reaction 3-dehydroquinate = 3-dehydroshikimate + H2O. It carries out the reaction shikimate + NADP(+) = 3-dehydroshikimate + NADPH + H(+). The enzyme catalyses shikimate + ATP = 3-phosphoshikimate + ADP + H(+). The catalysed reaction is 3-phosphoshikimate + phosphoenolpyruvate = 5-O-(1-carboxyvinyl)-3-phosphoshikimate + phosphate. It functions in the pathway metabolic intermediate biosynthesis; chorismate biosynthesis; chorismate from D-erythrose 4-phosphate and phosphoenolpyruvate: step 2/7. The protein operates within metabolic intermediate biosynthesis; chorismate biosynthesis; chorismate from D-erythrose 4-phosphate and phosphoenolpyruvate: step 3/7. It participates in metabolic intermediate biosynthesis; chorismate biosynthesis; chorismate from D-erythrose 4-phosphate and phosphoenolpyruvate: step 4/7. Its pathway is metabolic intermediate biosynthesis; chorismate biosynthesis; chorismate from D-erythrose 4-phosphate and phosphoenolpyruvate: step 5/7. It functions in the pathway metabolic intermediate biosynthesis; chorismate biosynthesis; chorismate from D-erythrose 4-phosphate and phosphoenolpyruvate: step 6/7. The AROM polypeptide catalyzes 5 consecutive enzymatic reactions in prechorismate polyaromatic amino acid biosynthesis. The sequence is that of Pentafunctional AROM polypeptide from Komagataella phaffii (strain GS115 / ATCC 20864) (Yeast).